The sequence spans 479 residues: Ribosomal RNA small subunit methyltransferase F (479 aa).

Residues 125–131 (AAAPGSK), Glu-149, Asp-176, and Asp-194 each bind S-adenosyl-L-methionine. Cys-247 acts as the Nucleophile in catalysis.

The protein belongs to the class I-like SAM-binding methyltransferase superfamily. RsmB/NOP family.

It is found in the cytoplasm. It carries out the reaction cytidine(1407) in 16S rRNA + S-adenosyl-L-methionine = 5-methylcytidine(1407) in 16S rRNA + S-adenosyl-L-homocysteine + H(+). Its function is as follows. Specifically methylates the cytosine at position 1407 (m5C1407) of 16S rRNA. In Escherichia coli (strain ATCC 8739 / DSM 1576 / NBRC 3972 / NCIMB 8545 / WDCM 00012 / Crooks), this protein is Ribosomal RNA small subunit methyltransferase F.